Consider the following 222-residue polypeptide: Type II restriction enzyme AbrI (222 aa).

Disordered regions lie at residues 21–45 (GNREKARQKQQESGKPDQGERRRDR) and 161–222 (NQRR…SPRI). The segment covering 22 to 42 (NREKARQKQQESGKPDQGERR) has biased composition (basic and acidic residues). Positions 188 to 202 (SSASGSSRSSFTPRP) are enriched in low complexity.

The protein belongs to the XhoI type II restriction endonuclease family.

It catalyses the reaction Endonucleolytic cleavage of DNA to give specific double-stranded fragments with terminal 5'-phosphates.. In terms of biological role, a P subtype restriction enzyme that recognizes the double-stranded sequence 5'-CTCGAG-3' and cleaves after C-1. The chain is Type II restriction enzyme AbrI (abrIR) from Azospirillum brasilense.